A 342-amino-acid polypeptide reads, in one-letter code: MFEVTVVSSEFDAKIQQKIDTKTKPLGALGALETLAMTIARVLGPDKPQITKPTLLVFAGDHGIAASGVSIAPSEVTTQMVMNFLKGGAAINLFCAQGGITMEVIDCGIAQEIHDQPKLINHRLGAGTGAIHREPAMTLGAVKQGFAMARERVALHHGRGCNLIAFGEMGIGNTSSAAAIMAALMGREAAECVGRGTGIDAATLARKQLLVEQALFLHREQLGDPYGVLACLGGFEIVQMTGAILAAAELKMLVLIDGFIATAAALAAVTIAPHARDYMIFAHESGERGHKLMLEHLNAQPLLSLGLRLGEGTGAALAVPLVQAAATFYNEMASLEEMGISI.

The active-site Proton acceptor is glutamate 311.

This sequence belongs to the CobT family.

It carries out the reaction 5,6-dimethylbenzimidazole + nicotinate beta-D-ribonucleotide = alpha-ribazole 5'-phosphate + nicotinate + H(+). It participates in nucleoside biosynthesis; alpha-ribazole biosynthesis; alpha-ribazole from 5,6-dimethylbenzimidazole: step 1/2. In terms of biological role, catalyzes the synthesis of alpha-ribazole-5'-phosphate from nicotinate mononucleotide (NAMN) and 5,6-dimethylbenzimidazole (DMB). This Shewanella loihica (strain ATCC BAA-1088 / PV-4) protein is Nicotinate-nucleotide--dimethylbenzimidazole phosphoribosyltransferase.